The following is a 232-amino-acid chain: Large ribosomal subunit protein uL1 (232 aa).

The protein belongs to the universal ribosomal protein uL1 family. In terms of assembly, part of the 50S ribosomal subunit.

Functionally, binds directly to 23S rRNA. The L1 stalk is quite mobile in the ribosome, and is involved in E site tRNA release. Protein L1 is also a translational repressor protein, it controls the translation of the L11 operon by binding to its mRNA. The polypeptide is Large ribosomal subunit protein uL1 (Burkholderia mallei (strain NCTC 10247)).